A 362-amino-acid polypeptide reads, in one-letter code: 3-dehydroquinate synthase (362 aa).

NAD(+)-binding positions include 71-76, 105-109, 129-130, lysine 142, lysine 151, and 169-172; these read DGEQYK, GVVGD, TT, and CLNT. Zn(2+) contacts are provided by glutamate 184, histidine 247, and histidine 264.

This sequence belongs to the sugar phosphate cyclases superfamily. Dehydroquinate synthase family. Requires Co(2+) as cofactor. Zn(2+) serves as cofactor. NAD(+) is required as a cofactor.

It localises to the cytoplasm. The enzyme catalyses 7-phospho-2-dehydro-3-deoxy-D-arabino-heptonate = 3-dehydroquinate + phosphate. The protein operates within metabolic intermediate biosynthesis; chorismate biosynthesis; chorismate from D-erythrose 4-phosphate and phosphoenolpyruvate: step 2/7. Catalyzes the conversion of 3-deoxy-D-arabino-heptulosonate 7-phosphate (DAHP) to dehydroquinate (DHQ). In Enterobacter sp. (strain 638), this protein is 3-dehydroquinate synthase.